Consider the following 86-residue polypeptide: Serine protease inhibitor Kazal-type 4 (86 aa).

An N-terminal signal peptide occupies residues Met1–Ala26. Residues Phe31 to Cys86 enclose the Kazal-like domain. 3 disulfides stabilise this stretch: Cys37-Cys68, Cys46-Cys65, and Cys54-Cys86.

Synthesized in duodenal goblet cells and in monocytes in bone marrow and blood.

It localises to the secreted. In terms of biological role, inhibits the glucose-induced insulin secretion from perfused pancreas; also plays a role in the immune system. Does not inhibit trypsin. In Sus scrofa (Pig), this protein is Serine protease inhibitor Kazal-type 4 (SPINK4).